Consider the following 494-residue polypeptide: MASGILVNVKEEVTCPICLELLTQPLSLDCGHSFCQACLTANHKTSMPDEGERSCPVCRISYQHKNIQPNRHVANIVEKLREVKLSPEEGQKVDHCARHGEKLLLFCQEDRKVICWLCERSQEHRGHHTFLTEEVAQEYQVKLQAALQMLRQKQQEAEELEADIREEKASWKTQIQYDKTNILADFEQLRHILDWVESNELQNLEKEEKDVLKRLMRSEIEMVQQTQSVRELISDLEHRLQGSVMELLQGVDGVIKRMKNVTLKKPETFPKNRRRVFRAADLKVMLEVLRELRDVRRYWVDVTVAPNNISYAVISEDMRQVSSPEPQIIFEAQGTISQTFVNFNYCTGILGSQSITSGKHYWEVDVSKKSAWILGVCAGFQPDAMYNIEQNENYQPKYGYWVIGLEEGVKCNAFQDGSIHTPSAPFIVPLSVNICPDRVGVFLDYEACTVSFFNITNHGFLIYKFSHCSFSQPVFPYLNPRKCTVPMTLCSPSS.

An N-acetylalanine modification is found at alanine 2. Residues 15 to 59 (CPICLELLTQPLSLDCGHSFCQACLTANHKTSMPDEGERSCPVCR) form an RING-type zinc finger. The residue at position 86 (serine 86) is a Phosphoserine. The B box-type zinc-finger motif lies at 91 to 133 (QKVDHCARHGEKLLLFCQEDRKVICWLCERSQEHRGHHTFLTE). The Zn(2+) site is built by cysteine 96, histidine 99, cysteine 118, and histidine 124. A coiled-coil region spans residues 132–241 (TEEVAQEYQV…LISDLEHRLQ (110 aa)). The segment at 186–199 (FEQLRHILDWVESN) is required for interaction with GABARAP and for autophagy. A B30.2/SPRY domain is found at 282-494 (LKVMLEVLRE…VPMTLCSPSS (213 aa)).

The protein belongs to the TRIM/RBCC family. As to quaternary structure, can form homodimers and homotrimers. In addition to lower-order dimerization, also exhibits a higher-order multimerization and both low- and high-order multimerizations are essential for its restriction activity. Interacts with BTBD1 and BTBD2. Interacts with PSMC4, PSMC5, PSMD7 and HSPA8/HSC70. Interacts (via B30.2/SPRY domain) with HSPA1A/B. Interacts with PSMC2, MAP3K7/TAK1, TAB2 and TAB3. Interacts with SQSTM1. Interacts with TRIM6 and TRIM34. Interacts with ULK1 (phosphorylated form), GABARAP, GABARAPL1, GABARAPL2, MAP1LC3A, MAP1LC3C and BECN1. Post-translationally, degraded in a proteasome-independent fashion in the absence of viral infection but in a proteasome-dependent fashion following exposure to restriction sensitive virus. In terms of processing, autoubiquitinated in a RING finger- and UBE2D2-dependent manner. Monoubiquitinated by TRIM21. Deubiquitinated by Yersinia YopJ. Ubiquitination may not lead to proteasomal degradation.

It localises to the cytoplasm. It is found in the nucleus. It catalyses the reaction S-ubiquitinyl-[E2 ubiquitin-conjugating enzyme]-L-cysteine + [acceptor protein]-L-lysine = [E2 ubiquitin-conjugating enzyme]-L-cysteine + N(6)-ubiquitinyl-[acceptor protein]-L-lysine.. Its pathway is protein modification; protein ubiquitination. In terms of biological role, capsid-specific restriction factor that prevents infection from non-host-adapted retroviruses. Blocks viral replication early in the life cycle, after viral entry but before reverse transcription. In addition to acting as a capsid-specific restriction factor, also acts as a pattern recognition receptor that activates innate immune signaling in response to the retroviral capsid lattice. Binding to the viral capsid triggers its E3 ubiquitin ligase activity, and in concert with the heterodimeric ubiquitin conjugating enzyme complex UBE2V1-UBE2N (also known as UBC13-UEV1A complex) generates 'Lys-63'-linked polyubiquitin chains, which in turn are catalysts in the autophosphorylation of the MAP3K7/TAK1 complex (includes TAK1, TAB2, and TAB3). Activation of the MAP3K7/TAK1 complex by autophosphorylation results in the induction and expression of NF-kappa-B and MAPK-responsive inflammatory genes, thereby leading to an innate immune response in the infected cell. Plays a role in regulating autophagy through activation of autophagy regulator BECN1 by causing its dissociation from its inhibitors BCL2 and TAB2. This chain is Tripartite motif-containing protein 5 (TRIM5), found in Symphalangus syndactylus (Siamang).